The sequence spans 501 residues: Cytochrome P450 81F4 (501 aa).

A Glycyl lysine isopeptide (Lys-Gly) (interchain with G-Cter in ubiquitin) cross-link involves residue K245. The chain crosses the membrane as a helical span at residues 285–305; it reads IIIKGLMLGIMVASSETSALT. C435 is a binding site for heme.

This sequence belongs to the cytochrome P450 family. Heme serves as cofactor.

It localises to the membrane. The protein operates within secondary metabolite biosynthesis. Functionally, involved in indole glucosinolate biosynthesis. Catalyzes hydroxylation reactions of the glucosinolate indole ring. Converts indol-3-yl-methylglucosinolate (I3M) to 1-hydroxy-indol-3-yl-methylglucosinolate (1OH-I3M) intermediate. This hydroxy intermediates is converted to 1-methoxy-indol-3-yl-methylglucosinolate (1MO-I3M) by indole glucosinolate methyltransferase 1 and 2 (IGMT1 and IGMT2). In Arabidopsis thaliana (Mouse-ear cress), this protein is Cytochrome P450 81F4.